The following is a 489-amino-acid chain: Betaine aldehyde dehydrogenase (489 aa).

2 residues coordinate K(+): Thr26 and Asp93. 150–152 (GAW) contacts NAD(+). The active-site Charge relay system is Lys162. 176–179 (KPSE) is an NAD(+) binding site. Val180 is a binding site for K(+). NAD(+) is bound at residue 229-232 (GVET). Residue Leu245 coordinates K(+). Glu251 serves as the catalytic Proton acceptor. The NAD(+) site is built by Gly253, Cys285, and Glu386. Cys285 functions as the Nucleophile in the catalytic mechanism. Cysteine sulfenic acid (-SOH) is present on Cys285. Lys456 and Gly459 together coordinate K(+). Residue Glu463 is the Charge relay system of the active site.

It belongs to the aldehyde dehydrogenase family. As to quaternary structure, dimer of dimers. Requires K(+) as cofactor.

It catalyses the reaction betaine aldehyde + NAD(+) + H2O = glycine betaine + NADH + 2 H(+). The protein operates within amine and polyamine biosynthesis; betaine biosynthesis via choline pathway; betaine from betaine aldehyde: step 1/1. Its function is as follows. Involved in the biosynthesis of the osmoprotectant glycine betaine. Catalyzes the irreversible oxidation of betaine aldehyde to the corresponding acid. In Burkholderia orbicola (strain AU 1054), this protein is Betaine aldehyde dehydrogenase.